Reading from the N-terminus, the 1910-residue chain is A disintegrin and metalloproteinase with thrombospondin motifs 20 (1910 aa).

Residues 1 to 21 (MWVAKWLTGLLYHLSLFITRS) form the signal peptide. Positions 22–253 (WEVDFHPRQE…DERRHSRKKR (232 aa)) are excised as a propeptide. N-linked (GlcNAc...) asparagine glycosylation is found at N92 and N191. The 209-residue stretch at 259-467 (RYIEIMVTAD…GYGECLLDKP (209 aa)) folds into the Peptidase M12B domain. Intrachain disulfides connect C334-C387, C363-C369, C381-C462, C419-C446, C489-C511, C500-C521, C506-C540, C534-C545, C568-C605, C572-C610, and C583-C595. Zn(2+) is bound at residue H403. E404 is a catalytic residue. Residues H407 and H413 each coordinate Zn(2+). Residue N445 is glycosylated (N-linked (GlcNAc...) asparagine). Residues 468-555 (DEEIYNLPSE…VNKETETRPV (88 aa)) form the Disintegrin domain. The 56-residue stretch at 556-611 (NGEWGPWEPYSSCSRTCGGGIESATRRCNRPEPRNGGNYCVGRRMKFRSCNTDSCP) folds into the TSP type-1 1 domain. N-linked (GlcNAc...) asparagine glycans are attached at residues N702, N717, N728, N809, and N870. The tract at residues 724–846 (TGVFNSSHYG…FNIPLEERSD (123 aa)) is spacer. TSP type-1 domains lie at 846 to 904 (DMFT…NTDC), 905 to 961 (ELRW…QELC), 966 to 1023 (VFTR…FSCP), 1024 to 1073 (SWAA…SPCE), 1076 to 1135 (TCAS…TPCS), 1152 to 1206 (KMAQ…DCFT), 1207 to 1264 (PCGE…AACP), 1304 to 1356 (RGNQ…QCGP), 1358 to 1416 (PCPQ…HACP), 1417 to 1475 (ADVS…VRCP), 1476 to 1531 (SWKA…QDCV), 1535 to 1588 (GMER…NPPC), 1589 to 1652 (NYIV…INSC), and 1654 to 1710 (HLAT…NDCK). An N-linked (GlcNAc...) asparagine glycan is attached at N1061. N-linked (GlcNAc...) asparagine glycosylation occurs at N1456. Residues N1542 and N1572 are each glycosylated (N-linked (GlcNAc...) asparagine). In terms of domain architecture, GON spans 1711 to 1910 (SFTTCKEIQV…MTTGLPIQVI (200 aa)). N1763, N1781, and N1852 each carry an N-linked (GlcNAc...) asparagine glycan.

Requires Zn(2+) as cofactor. The precursor is cleaved by a furin endopeptidase. Post-translationally, glycosylated. Can be O-fucosylated by POFUT2 on a serine or a threonine residue found within the consensus sequence C1-X(2)-(S/T)-C2-G of the TSP type-1 repeat domains where C1 and C2 are the first and second cysteine residue of the repeat, respectively. Fucosylated repeats can then be further glycosylated by the addition of a beta-1,3-glucose residue by the glucosyltransferase, B3GALTL. Fucosylation mediates the efficient secretion of ADAMTS family members. Can also be C-glycosylated with one or two mannose molecules on tryptophan residues within the consensus sequence W-X-X-W of the TPRs, and N-glycosylated. These other glycosylations can also facilitate secretion. As to expression, very sparingly expressed, although is detected at low levels in testis, prostate, ovary, heart, placenta, lung and pancreas. Overexpressed in several brain, colon and breast carcinomas.

It is found in the secreted. Its subcellular location is the extracellular space. It localises to the extracellular matrix. Its function is as follows. May play a role in tissue-remodeling process occurring in both normal and pathological conditions. May have a protease-independent function in the transport from the endoplasmic reticulum to the Golgi apparatus of secretory cargos, mediated by the GON domain. In Homo sapiens (Human), this protein is A disintegrin and metalloproteinase with thrombospondin motifs 20 (ADAMTS20).